A 305-amino-acid chain; its full sequence is UDP-3-O-acyl-N-acetylglucosamine deacetylase (305 aa).

3 residues coordinate Zn(2+): His-79, His-238, and Asp-242. The active-site Proton donor is the His-265.

Belongs to the LpxC family. It depends on Zn(2+) as a cofactor.

The enzyme catalyses a UDP-3-O-[(3R)-3-hydroxyacyl]-N-acetyl-alpha-D-glucosamine + H2O = a UDP-3-O-[(3R)-3-hydroxyacyl]-alpha-D-glucosamine + acetate. The protein operates within glycolipid biosynthesis; lipid IV(A) biosynthesis; lipid IV(A) from (3R)-3-hydroxytetradecanoyl-[acyl-carrier-protein] and UDP-N-acetyl-alpha-D-glucosamine: step 2/6. Catalyzes the hydrolysis of UDP-3-O-myristoyl-N-acetylglucosamine to form UDP-3-O-myristoylglucosamine and acetate, the committed step in lipid A biosynthesis. This Proteus mirabilis (strain HI4320) protein is UDP-3-O-acyl-N-acetylglucosamine deacetylase.